A 231-amino-acid polypeptide reads, in one-letter code: Putative 3-methyladenine DNA glycosylase (231 aa).

Belongs to the DNA glycosylase MPG family.

This is Putative 3-methyladenine DNA glycosylase from Pseudomonas fluorescens (strain Pf0-1).